Here is a 275-residue protein sequence, read N- to C-terminus: MKSIIDVKNLSFRYKENQNYYDVKDITFHVKRGEWLSIVGHNGSGKSTTVRLIDGLLEAESGEIVIDGQRLTEENVWNIRRQIGMVFQNPDNQFVGATVEDDVAFGLENQGLSRQEMKKRVEEALALVGMLDFKKREPARLSGGQKQRVAIAGVVALRPAILILDEATSMLDPEGRRELIGTVKGIRKDYDMTVISITHDLEEVAMSDRVLVMKKGEIESTSSPRELFSRNDLDQIGLDDPFANQLKKSLSQNGYDLPENYLTESELEDKLWELL.

The region spanning 5–240 (IDVKNLSFRY…NDLDQIGLDD (236 aa)) is the ABC transporter domain. ATP is bound at residue 40–47 (GHNGSGKS).

Belongs to the ABC transporter superfamily. Energy-coupling factor EcfA family. As to quaternary structure, forms a stable energy-coupling factor (ECF) transporter complex composed of 2 membrane-embedded substrate-binding proteins (S component), 2 ATP-binding proteins (A component) and 2 transmembrane proteins (T component).

The protein localises to the cell membrane. In terms of biological role, ATP-binding (A) component of a common energy-coupling factor (ECF) ABC-transporter complex. Unlike classic ABC transporters this ECF transporter provides the energy necessary to transport a number of different substrates. This Streptococcus pneumoniae serotype 4 (strain ATCC BAA-334 / TIGR4) protein is Energy-coupling factor transporter ATP-binding protein EcfA1.